The sequence spans 89 residues: MPPHGHHHHHHGHHGHHEHITITPVYAPPQVVQPIYAPPPVVQPVYVQPPVVYPQATIVLETGHHHGHHHHHGHHGHHDHHHHGHHGHH.

Basic residues-rich tracts occupy residues 1-17 (MPPHGHHHHHHGHHGHH) and 65-89 (HHGHHHHHGHHGHHDHHHHGHHGHH). 2 disordered regions span residues 1 to 25 (MPPHGHHHHHHGHHGHHEHITITPV) and 60 to 89 (LETGHHHGHHHHHGHHGHHDHHHHGHHGHH).

This is an uncharacterized protein from Dictyostelium discoideum (Social amoeba).